The sequence spans 262 residues: uncharacterized protein (262 aa).

Positions 1 to 22 (MMNNSITLLLALLVGLVGFAFT) are cleaved as a signal peptide.

Belongs to the IIV-6 117L family.

This is an uncharacterized protein from Aedes vexans (Inland floodwater mosquito).